We begin with the raw amino-acid sequence, 209 residues long: Auxin-binding protein ABP19a (209 aa).

A signal peptide spans 1-18 (MIFPIFFTFFLLLSSSHA). Cys-24 and Cys-39 form a disulfide bridge. One can recognise a Cupin type-1 domain in the interval 53–199 (SGLGIAGNTT…TTFLDAAQIK (147 aa)). Asn-60 is a glycosylation site (N-linked (GlcNAc...) asparagine). Mn(2+) is bound by residues His-101, His-103, Glu-108, and His-147.

The protein belongs to the germin family. In terms of assembly, interacts with ABP20.

Its subcellular location is the secreted. The protein resides in the extracellular space. The protein localises to the apoplast. It is found in the cell wall. Functionally, probable receptor for the plant growth-promoting hormone auxin. This chain is Auxin-binding protein ABP19a (ABP19A), found in Prunus persica (Peach).